The sequence spans 459 residues: Glycosyl hydrolase family 109 protein (459 aa).

The segment at residues 1 to 31 is a signal peptide (tat-type signal); sequence MHNIHRRNFLKAAGAATAGLVTANIALSAYA. Residues 64-65, Asp-86, 135-138, 155-156, and Asn-184 each bind NAD(+); these read ER, WEWH, and EV. Residues Tyr-213, Arg-232, 244–247, and Tyr-326 contribute to the substrate site; that span reads YPTH. Tyr-244 contacts NAD(+).

Belongs to the Gfo/Idh/MocA family. Glycosyl hydrolase 109 subfamily. NAD(+) is required as a cofactor. In terms of processing, predicted to be exported by the Tat system. The position of the signal peptide cleavage has not been experimentally proven.

Its function is as follows. Glycosidase. In Shewanella baltica (strain OS185), this protein is Glycosyl hydrolase family 109 protein.